Reading from the N-terminus, the 163-residue chain is Putative pre-16S rRNA nuclease (163 aa).

The protein belongs to the YqgF nuclease family.

The protein localises to the cytoplasm. Functionally, could be a nuclease involved in processing of the 5'-end of pre-16S rRNA. This is Putative pre-16S rRNA nuclease from Zymomonas mobilis subsp. mobilis (strain ATCC 31821 / ZM4 / CP4).